Reading from the N-terminus, the 145-residue chain is MAFTFAAFCYLLALIAVGFCIFFAIYTVICVDELRTDYKNPIEQCRNLNQLILPEYIIHGTFTVLFIFSWQLISILANLPLAFYHIYTYAKRPVMSGPGIYDPTTILNRSTLSSTLRISWIKLAFYLVSFFYYLYAMIYTLVTSN.

A run of 3 helical transmembrane segments spans residues phenylalanine 5 to isoleucine 25, isoleucine 57 to alanine 77, and leucine 116 to alanine 136.

This sequence belongs to the cornichon family. Interacts with glr-1. As to expression, widely expressed in the nervous system including in the AVA interneurons.

It is found in the endoplasmic reticulum membrane. Its subcellular location is the synapse. It localises to the cell projection. The protein localises to the dendrite. Negatively regulates export of glr-1 from the endoplasmic reticulum to synapses. The sequence is that of Protein cornichon homolog 1 from Caenorhabditis elegans.